Consider the following 658-residue polypeptide: UvrABC system protein B (658 aa).

The region spanning 26 to 413 is the Helicase ATP-binding domain; that stretch reads EGINSGKKKQ…SPEVIEQIIR (388 aa). Residue 39-46 coordinates ATP; it reads GATGTGKT. Residues 92 to 115 carry the Beta-hairpin motif; it reads YYDYYQPEAYVPQTDTFIEKDAQI. Positions 430–596 constitute a Helicase C-terminal domain; it reads QIDDLLGEIQ…TIQKGVRDVI (167 aa). Residues 622–657 enclose the UVR domain; it reads EKTIAKMEAEMKEAAKALDFERAAELRDLLLELKAE.

The protein belongs to the UvrB family. Forms a heterotetramer with UvrA during the search for lesions. Interacts with UvrC in an incision complex.

The protein localises to the cytoplasm. The UvrABC repair system catalyzes the recognition and processing of DNA lesions. A damage recognition complex composed of 2 UvrA and 2 UvrB subunits scans DNA for abnormalities. Upon binding of the UvrA(2)B(2) complex to a putative damaged site, the DNA wraps around one UvrB monomer. DNA wrap is dependent on ATP binding by UvrB and probably causes local melting of the DNA helix, facilitating insertion of UvrB beta-hairpin between the DNA strands. Then UvrB probes one DNA strand for the presence of a lesion. If a lesion is found the UvrA subunits dissociate and the UvrB-DNA preincision complex is formed. This complex is subsequently bound by UvrC and the second UvrB is released. If no lesion is found, the DNA wraps around the other UvrB subunit that will check the other stand for damage. This Bacillus cereus (strain ATCC 14579 / DSM 31 / CCUG 7414 / JCM 2152 / NBRC 15305 / NCIMB 9373 / NCTC 2599 / NRRL B-3711) protein is UvrABC system protein B.